A 436-amino-acid chain; its full sequence is MLADEILELLQTKISANEFDCYIKQLKFNEKASNEDFIVFNATSELMAKFIKTRYAEKIAYLYEVKTGKKPEVEITSQTKLKNIKQNQVNVKQIKAQSSILNPGYTFENFVCGDSNQFAFLNAKAVADKPGVLYNPLFIYGTTGLGKTHLLQSVGNYCLDQGKVVICVTSDQFMIDFTTHLNSHSMTKFREKYRNCDVLLIDDVQFLGKTDKIQEEFFNTFNELIAKKGQIVMTSDRPAKILKGFDERLKSRFEQSIMADITPPELDTKIAIIIKKCEFDKIYLNKEVIDYIATNMGDNIREIEGAIINLNAYASLMRVEITLEFAKNTLKDLIKEKHENINLETIIEIVSKELNIKPSDIKSKSRVQNIVEARRIIIYLAKMLTTNSMPQIANYFGMKDHSAVSHNIKKINELMESNEIFNLRVTEIKNKILTKG.

The interval 1–69 (MLADEILELL…AYLYEVKTGK (69 aa)) is domain I, interacts with DnaA modulators. The interval 69-99 (KKPEVEITSQTKLKNIKQNQVNVKQIKAQSS) is domain II. Residues 100 to 314 (ILNPGYTFEN…GAIINLNAYA (215 aa)) form a domain III, AAA+ region region. ATP-binding residues include Gly-144, Gly-146, Lys-147, and Thr-148. Residues 315 to 436 (SLMRVEITLE…EIKNKILTKG (122 aa)) are domain IV, binds dsDNA.

The protein belongs to the DnaA family. In terms of assembly, oligomerizes as a right-handed, spiral filament on DNA at oriC.

The protein resides in the cytoplasm. Its function is as follows. Plays an essential role in the initiation and regulation of chromosomal replication. ATP-DnaA binds to the origin of replication (oriC) to initiate formation of the DNA replication initiation complex once per cell cycle. Binds the DnaA box (a 9 base pair repeat at the origin) and separates the double-stranded (ds)DNA. Forms a right-handed helical filament on oriC DNA; dsDNA binds to the exterior of the filament while single-stranded (ss)DNA is stabiized in the filament's interior. The ATP-DnaA-oriC complex binds and stabilizes one strand of the AT-rich DNA unwinding element (DUE), permitting loading of DNA polymerase. After initiation quickly degrades to an ADP-DnaA complex that is not apt for DNA replication. Binds acidic phospholipids. The polypeptide is Chromosomal replication initiator protein DnaA (Campylobacter concisus (strain 13826)).